The following is a 173-amino-acid chain: NADH-ubiquinone oxidoreductase chain 6 (173 aa).

The next 5 helical transmembrane spans lie at 1 to 21 (MTYI…AVAS), 27 to 47 (FAAL…VGYG), 53 to 73 (LVLF…SAAL), 86 to 106 (SVLG…GWFW), and 139 to 159 (YGGG…FVVL).

This sequence belongs to the complex I subunit 6 family.

It localises to the mitochondrion membrane. The enzyme catalyses a ubiquinone + NADH + 5 H(+)(in) = a ubiquinol + NAD(+) + 4 H(+)(out). Its function is as follows. Core subunit of the mitochondrial membrane respiratory chain NADH dehydrogenase (Complex I) that is believed to belong to the minimal assembly required for catalysis. Complex I functions in the transfer of electrons from NADH to the respiratory chain. The immediate electron acceptor for the enzyme is believed to be ubiquinone. This Salmo salar (Atlantic salmon) protein is NADH-ubiquinone oxidoreductase chain 6 (MT-ND6).